We begin with the raw amino-acid sequence, 311 residues long: Glycerol-3-phosphate dehydrogenase [NAD(P)+] (311 aa).

The NADPH site is built by W11, R30, R31, and K95. Residues K95, G123, and S125 each coordinate sn-glycerol 3-phosphate. A127 provides a ligand contact to NADPH. Sn-glycerol 3-phosphate contacts are provided by K177, D230, S240, R241, and N242. K177 (proton acceptor) is an active-site residue. R241 is a binding site for NADPH. Residues V265 and E267 each contribute to the NADPH site.

The protein belongs to the NAD-dependent glycerol-3-phosphate dehydrogenase family.

It localises to the cytoplasm. It catalyses the reaction sn-glycerol 3-phosphate + NAD(+) = dihydroxyacetone phosphate + NADH + H(+). The catalysed reaction is sn-glycerol 3-phosphate + NADP(+) = dihydroxyacetone phosphate + NADPH + H(+). Its pathway is membrane lipid metabolism; glycerophospholipid metabolism. Its function is as follows. Catalyzes the reduction of the glycolytic intermediate dihydroxyacetone phosphate (DHAP) to sn-glycerol 3-phosphate (G3P), the key precursor for phospholipid synthesis. In Bartonella bacilliformis (strain ATCC 35685 / KC583 / Herrer 020/F12,63), this protein is Glycerol-3-phosphate dehydrogenase [NAD(P)+].